The chain runs to 225 residues: Testis-expressed protein 30 (225 aa).

The protein is Testis-expressed protein 30 (Tex30) of Mus musculus (Mouse).